Consider the following 198-residue polypeptide: FMN-dependent NADH:quinone oxidoreductase (198 aa).

FMN is bound by residues serine 10, 16–18, 94–97, and 138–141; these read SQS, MYNF, and TRGG.

Belongs to the azoreductase type 1 family. In terms of assembly, homodimer. The cofactor is FMN.

The enzyme catalyses 2 a quinone + NADH + H(+) = 2 a 1,4-benzosemiquinone + NAD(+). The catalysed reaction is N,N-dimethyl-1,4-phenylenediamine + anthranilate + 2 NAD(+) = 2-(4-dimethylaminophenyl)diazenylbenzoate + 2 NADH + 2 H(+). Functionally, quinone reductase that provides resistance to thiol-specific stress caused by electrophilic quinones. Its function is as follows. Also exhibits azoreductase activity. Catalyzes the reductive cleavage of the azo bond in aromatic azo compounds to the corresponding amines. The chain is FMN-dependent NADH:quinone oxidoreductase from Shewanella sp. (strain ANA-3).